The primary structure comprises 262 residues: Ribosomal RNA small subunit methyltransferase A (262 aa).

The S-adenosyl-L-methionine site is built by H16, L18, G43, E64, D89, and N109.

Belongs to the class I-like SAM-binding methyltransferase superfamily. rRNA adenine N(6)-methyltransferase family. RsmA subfamily.

The protein resides in the cytoplasm. The catalysed reaction is adenosine(1518)/adenosine(1519) in 16S rRNA + 4 S-adenosyl-L-methionine = N(6)-dimethyladenosine(1518)/N(6)-dimethyladenosine(1519) in 16S rRNA + 4 S-adenosyl-L-homocysteine + 4 H(+). Its function is as follows. Specifically dimethylates two adjacent adenosines (A1518 and A1519) in the loop of a conserved hairpin near the 3'-end of 16S rRNA in the 30S particle. May play a critical role in biogenesis of 30S subunits. The chain is Ribosomal RNA small subunit methyltransferase A from Xanthomonas oryzae pv. oryzae (strain MAFF 311018).